The sequence spans 244 residues: Homeobox-leucine zipper protein HOX14 (244 aa).

Residues 25–64 (ASGEVQGERPRARRRRRRGARCVGGGGGGGEVDGGDPKKR) are disordered. Over residues 35-44 (RARRRRRRGA) the composition is skewed to basic residues. Residues 46 to 56 (CVGGGGGGGEV) show a composition bias toward gly residues. The segment at residues 59 to 118 (GDPKKRRLSDEQVEMLELSFREERKLETGRKVHLASELGLDPKQVAVWFQNRRARHKSKL) is a DNA-binding region (homeobox). Positions 108-167 (QNRRARHKSKLLEEEFSKLKHAHDAAILHKCHLENEVLRLKERLVVAEEEVRRLRSAAGS) form a coiled coil.

Belongs to the HD-ZIP homeobox family. Class I subfamily. Expressed in roots, stems, leaf blades and panicles.

It localises to the nucleus. Its function is as follows. Probable transcription factor. The chain is Homeobox-leucine zipper protein HOX14 (HOX14) from Oryza sativa subsp. indica (Rice).